The following is a 327-amino-acid chain: Complex I intermediate-associated protein 30, mitochondrial (327 aa).

The transit peptide at 1-24 (MALVHKLLRGTYILRKFSKPASAL) directs the protein to the mitochondrion. The disordered stretch occupies residues 42 to 63 (PVASPGKASSQRKTEGDLQGDH). Basic and acidic residues predominate over residues 53–63 (RKTEGDLQGDH). Phosphoserine is present on Ser318.

This sequence belongs to the CIA30 family. As to quaternary structure, part of the mitochondrial complex I assembly/MCIA complex that comprises at least the core subunits TMEM126B, NDUFAF1, ECSIT and ACAD9 and complement subunits such as COA1 and TMEM186. Interacts with ECSIT. Interacts with ACAD9. At early stages of complex I assembly, it is found in intermediate subcomplexes that contain different subunits including NDUFB6, NDUFA6, NDUFA9, NDUFS3, NDUFS7, ND1, ND2 and ND3. Interacts with TMEM70 and TMEM242.

It localises to the mitochondrion. The protein localises to the mitochondrion matrix. In terms of biological role, as part of the MCIA complex, involved in the assembly of the mitochondrial complex I. The polypeptide is Complex I intermediate-associated protein 30, mitochondrial (Pongo pygmaeus (Bornean orangutan)).